We begin with the raw amino-acid sequence, 353 residues long: Photosystem II D2 protein (353 aa).

Thr2 carries the N-acetylthreonine modification. Thr2 is modified (phosphothreonine). A helical transmembrane segment spans residues 41–61 (CAYFALGGWFTGTTFVTSWYT). His118 contributes to the chlorophyll a binding site. The chain crosses the membrane as a helical span at residues 125–141 (GFMLRQFELARSVQLRP). Residues Gln130 and Asn143 each contribute to the pheophytin a site. A helical transmembrane segment spans residues 153 to 166 (VFVSVFLIYPLGQS). His198 contacts chlorophyll a. A helical membrane pass occupies residues 208 to 228 (AALLCAIHGATVENTLFEDGD). His215 and Phe262 together coordinate a plastoquinone. His215 is a binding site for Fe cation. His269 is a binding site for Fe cation. Residues 279 to 295 (GLWMSALGVVGLALNLR) form a helical membrane-spanning segment.

It belongs to the reaction center PufL/M/PsbA/D family. In terms of assembly, PSII is composed of 1 copy each of membrane proteins PsbA, PsbB, PsbC, PsbD, PsbE, PsbF, PsbH, PsbI, PsbJ, PsbK, PsbL, PsbM, PsbT, PsbX, PsbY, PsbZ, Psb30/Ycf12, at least 3 peripheral proteins of the oxygen-evolving complex and a large number of cofactors. It forms dimeric complexes. The D1/D2 heterodimer binds P680, chlorophylls that are the primary electron donor of PSII, and subsequent electron acceptors. It shares a non-heme iron and each subunit binds pheophytin, quinone, additional chlorophylls, carotenoids and lipids. There is also a Cl(-1) ion associated with D1 and D2, which is required for oxygen evolution. The PSII complex binds additional chlorophylls, carotenoids and specific lipids. is required as a cofactor.

It is found in the plastid. The protein resides in the chloroplast thylakoid membrane. It carries out the reaction 2 a plastoquinone + 4 hnu + 2 H2O = 2 a plastoquinol + O2. Its function is as follows. Photosystem II (PSII) is a light-driven water:plastoquinone oxidoreductase that uses light energy to abstract electrons from H(2)O, generating O(2) and a proton gradient subsequently used for ATP formation. It consists of a core antenna complex that captures photons, and an electron transfer chain that converts photonic excitation into a charge separation. The D1/D2 (PsbA/PsbD) reaction center heterodimer binds P680, the primary electron donor of PSII as well as several subsequent electron acceptors. D2 is needed for assembly of a stable PSII complex. The sequence is that of Photosystem II D2 protein from Platanus occidentalis (Sycamore).